The following is a 76-amino-acid chain: uncharacterized protein (76 aa).

EF-hand domains follow at residues 9-44 (EMDE…LGEN) and 43-76 (ENLT…IHIS).

It is found in the cytoplasm. The protein resides in the nucleus. This is an uncharacterized protein from Schizosaccharomyces pombe (strain 972 / ATCC 24843) (Fission yeast).